A 295-amino-acid polypeptide reads, in one-letter code: SPX domain-containing protein 1 (295 aa).

The region spanning 1–166 (MKFGKSLSSQ…GALIRLPFIQ (166 aa)) is the SPX domain. Residues 199–227 (LSVSSEDGRGDSTNEDKPSNPSSSLVNGG) are disordered. Positions 204–216 (EDGRGDSTNEDKP) are enriched in basic and acidic residues.

Interacts (via SPX domain) with PHR2 (via C-terminus). Interacts with RLI1 in the nucleus to prevents its positive regulation of leaf inclination during phosphate (Pi) starvation. Predominantly expressed in roots and leaves. Localized in leaves lamina joints.

The protein resides in the nucleus. Functionally, involved in plant adaptation to phosphate (Pi) starvation. Inhibits PHR2 DNA-binding activity via a Pi-dependent protein interaction. Suppresses the regulation on expression of PT2 by PHR2 and accumulation of shoot Pi. Optimizes growth under phosphate-limited conditions through a negative feedback loop of the PSI (phosphate starvation-induced) signaling pathway. Regulates the expression of SPX2, SPX3 and SPX5. May be an important link between signal transduction pathways related to phosphate starvation and cold stress. Together with SPX2, plays a negative role in the regulation of leaf inclination by preventing RLI1 transcription factor activity in Pi depleted conditions. The polypeptide is SPX domain-containing protein 1 (Oryza sativa subsp. japonica (Rice)).